The sequence spans 207 residues: Dephospho-CoA kinase (207 aa).

In terms of domain architecture, DPCK spans 4-204; it reads VVGLTGGIGS…HLYLQFAEIF (201 aa). 12–17 contacts ATP; the sequence is GSGKST.

It belongs to the CoaE family.

The protein localises to the cytoplasm. It catalyses the reaction 3'-dephospho-CoA + ATP = ADP + CoA + H(+). The protein operates within cofactor biosynthesis; coenzyme A biosynthesis; CoA from (R)-pantothenate: step 5/5. Its function is as follows. Catalyzes the phosphorylation of the 3'-hydroxyl group of dephosphocoenzyme A to form coenzyme A. The sequence is that of Dephospho-CoA kinase from Aggregatibacter actinomycetemcomitans (Actinobacillus actinomycetemcomitans).